A 155-amino-acid polypeptide reads, in one-letter code: S-ribosylhomocysteine lyase (155 aa).

3 residues coordinate Fe cation: His58, His62, and Cys125.

Belongs to the LuxS family. Homodimer. Requires Fe cation as cofactor.

It catalyses the reaction S-(5-deoxy-D-ribos-5-yl)-L-homocysteine = (S)-4,5-dihydroxypentane-2,3-dione + L-homocysteine. Its function is as follows. Involved in the synthesis of autoinducer 2 (AI-2) which is secreted by bacteria and is used to communicate both the cell density and the metabolic potential of the environment. The regulation of gene expression in response to changes in cell density is called quorum sensing. Catalyzes the transformation of S-ribosylhomocysteine (RHC) to homocysteine (HC) and 4,5-dihydroxy-2,3-pentadione (DPD). The polypeptide is S-ribosylhomocysteine lyase (Helicobacter pylori (strain HPAG1)).